Reading from the N-terminus, the 406-residue chain is MKGFLTLLLVCAILSTGYCQSRRRAALTGLVAGATIGALASGGLGAGAGGFGVGGFPVGVGAVGIPVAVGGGIPYGYGGYSGYGYGYPAGGYGGYSYGYPTGGYGGYSYGYPTGGYGGYSYGYPTGGYGGYSYGYPTGGYSGYSYGYPTGGYSGYSYGYPTGGYSGYSYGYPTGGYSGYSYGYPTGGYSGYSYGYPTGGYSGYSYPTGGYSGYSYSSTPGYGYYGSGSGMGGMRSGYSYYSSPAPSYYSSGSMTPGYGYYSSGSGIGGGMGSGYSYYSSPAPSYYSSSVSPGYGYYGSGSGMRGYGYYSSSTPMYYGSRSTGYGPFSSGLGGMGSGYSYYSSSTPSYYSSGSMTPGYGYYGSTSYPGPGYGSYSYRTTSYQPSSYGYSSYGTTYPGHGHWHGHKDC.

A signal peptide spans 1–19; that stretch reads MKGFLTLLLVCAILSTGYC. 2 consecutive transmembrane segments (helical) span residues 26–48 and 58–80; these read ALTG…GAGA and VGVG…YGGY. Residues 78–197 are 10 X 12 AA tandem repeat of G-G-Y-[SG]-G-Y-[GS]-Y-G-Y-P-[AT]; that stretch reads GGYSGYGYGY…YSGYSYGYPT (120 aa).

As to expression, expression is confined to the prism and organic layers of the shell with no expression detected in the nacreous shell layer. Also expressed in the mantle edge, extrapallial fluid, hemolymph and, to a lesser extent, in the viscus (at protein level). In the mantle, localizes to inner epithelial cells of the outer fold and the outer epithelial cells of the middle fold at the bottom of the periostracal groove.

The protein resides in the membrane. In terms of biological role, binds chitin and may serve as a framework constituent participating in shell formation. Inhibits aragonite precipitation and may regulate aragonite growth during shell layer formation. Does not affect calcite crystallization. The chain is Prisilkin-39 from Pinctada fucata (Akoya pearl oyster).